Consider the following 274-residue polypeptide: NH(3)-dependent NAD(+) synthetase (274 aa).

46 to 53 (GISGGQDS) provides a ligand contact to ATP. Asp52 lines the Mg(2+) pocket. Residue Arg140 participates in deamido-NAD(+) binding. Residue Thr160 coordinates ATP. Mg(2+) is bound at residue Glu165. Residues Lys173 and Asp180 each contribute to the deamido-NAD(+) site. Lys189 and Thr211 together coordinate ATP. Residue 260 to 261 (HK) coordinates deamido-NAD(+).

Belongs to the NAD synthetase family. In terms of assembly, homodimer.

The enzyme catalyses deamido-NAD(+) + NH4(+) + ATP = AMP + diphosphate + NAD(+) + H(+). It participates in cofactor biosynthesis; NAD(+) biosynthesis; NAD(+) from deamido-NAD(+) (ammonia route): step 1/1. Its function is as follows. Catalyzes the ATP-dependent amidation of deamido-NAD to form NAD. Uses ammonia as a nitrogen source. This Lactococcus lactis subsp. lactis (strain IL1403) (Streptococcus lactis) protein is NH(3)-dependent NAD(+) synthetase.